The sequence spans 367 residues: Terpene cyclase verU1 (367 aa).

The chain crosses the membrane as a helical span at residues 8–28 (IRCSLLLLGLVGIYTVWISSF). An N-linked (GlcNAc...) asparagine glycan is attached at asparagine 50. 8 helical membrane passes run 57 to 77 (FTGI…YWPV), 85 to 105 (LSLI…LFAL), 120 to 140 (MAMF…PIYC), 169 to 189 (CLLG…PAVV), 197 to 217 (IIAL…LTHL), 239 to 259 (ISAM…SLLA), 292 to 312 (FQWD…GLHI), and 327 to 347 (LIPE…AALY). Asparagine 352 carries an N-linked (GlcNAc...) asparagine glycan.

It belongs to the membrane-bound ascI terpene cyclase family.

It is found in the membrane. It participates in secondary metabolite biosynthesis; terpenoid biosynthesis. The protein operates within mycotoxin biosynthesis. Terpene cyclase; part of the gene cluster that mediates the biosynthesis of the neurotoxin verrucosidin, a methylated alpha-pyrone polyketide that inhibits oxidative phosphorylation in mitochondria and thereby causes neurological diseases. The carbon backbone of verrucosidin is synthesized by the HR-PKS verA, and further modified by the other verrucodidin cluster enzymes. This chain is Terpene cyclase verU1, found in Penicillium polonicum.